Reading from the N-terminus, the 1119-residue chain is MLQQYTLLLIYLSVATAKTITGVFNSFNSLTWSNAATYNYKGPGTPTWNAVLGWSLDGTSASPGDTFTLNMPCVFKFTTSQTSVDLTAHGVKYATCQFQAGEEFMTFSTLTCTVSNTLTPSIKALGTVTLPLAFNVGGTGSSVDLEDSKCFTAGTNTVTFNDGGKKISINVDFERSNVDPKGYLTDSRVIPSLNKVSTLFVAPQCANGYTSGTMGFANTYGDVQIDCSNIHVGITKGLNDWNYPVSSESFSYTKTCSSNGIFITYKNVPAGYRPFVDAYISATDVNSYTLSYANEYTCAGGYWQRAPFTLRWTGYRNSDAGSNGIVIVATTRTVTDSTTAVTTLPFDPNRDKTKTIEILKPIPTTTITTSYVGVTTSYSTKTAPIGETATVIVDIPYHTTTTVTSKWTGTITSTTTHTNPTDSIDTVIVQVPSPNPTVTTTEYWSQSFATTTTITGPPGNTDTVLIREPPNHTVTTTEYWSESYTTTSTFTAPPGGTDSVIIKEPPNPTVTTTEYWSESYTTTSTFTAPPGGTDSVIIKEPPNHTVTTTEYWSQSYTTTTTVTAPPGGTDTVLVREPPNHTVTTTEYWSQSYTTTTTVIAPPGGTDSVIIREPPNPTVTTTEYWSQSYATTTTITAPPGETDTVLIREPPNHTVTTTEYWSQSYATTTTITAPPGETDTVLIREPPNHTVTTTEYWSQSFATTTTVTAPPGGTDTVIIREPPNHTVTTTEYWSQSYATTTTITAPPGETDTVLIREPPNHTVTTTEYWSQSYATTTTIIAPPGETDTVLIREPPNPTVTTTEYWSQSYTTATTVTAPPGGTDTVIIYDTMSSSEISSFSRPHYTNHTTLWSTTWVIETKTITETSCEGDKGCSWVSVSTRIVTIPNNIETPMVTNTVDSTTTESTSQSPSGIFSESGVSVETESSTVTTAQTNPSVPTTESEVVFTTKGNNENGPYESPSTNVKSSMDENSEFTTSTAASTSTDIENETIATTGSVEASSPIISSSADETTTVTTTAESTSVIEQPTNNNGGGKAPSATSSPSTTTTANNDSVITGTTSTNQSQSQSQYNSDTQQTTLSQQMTSSLVSLHMLTTFDGSGSVIQHSTWLCGLITLLSLFI.

Positions 1 to 17 are cleaved as a signal peptide; the sequence is MLQQYTLLLIYLSVATA. Cystine bridges form between cysteine 73–cysteine 150, cysteine 96–cysteine 112, cysteine 205–cysteine 298, and cysteine 227–cysteine 256. ALS repeat units lie at residues 365 to 396, 401 to 432, and 438 to 469; these read TTIT…VDIP, TTVT…VQVP, and VTTT…IREP. Asparagine 471 carries an N-linked (GlcNAc...) asparagine glycan. ALS repeat units follow at residues 474–505 and 510–541; these read VTTT…IKEP. Asparagine 543 carries N-linked (GlcNAc...) asparagine glycosylation. Residues 546–577 form an ALS 6 repeat; sequence VTTTEYWSQSYTTTTTVTAPPGGTDTVLVREP. An N-linked (GlcNAc...) asparagine glycan is attached at asparagine 579. 2 ALS repeats span residues 582–613 and 618–649; these read VTTT…IREP. An N-linked (GlcNAc...) asparagine glycan is attached at asparagine 651. Residues 654-685 form an ALS 9 repeat; that stretch reads VTTTEYWSQSYATTTTITAPPGETDTVLIREP. An N-linked (GlcNAc...) asparagine glycan is attached at asparagine 687. An ALS 10 repeat occupies 690–721; that stretch reads VTTTEYWSQSFATTTTVTAPPGGTDTVIIREP. N-linked (GlcNAc...) asparagine glycosylation occurs at asparagine 723. Residues 726–757 form an ALS 11 repeat; that stretch reads VTTTEYWSQSYATTTTITAPPGETDTVLIREP. The N-linked (GlcNAc...) asparagine glycan is linked to asparagine 759. ALS repeat units follow at residues 762–793 and 798–827; these read VTTT…IREP and VTTT…VIIY. Asparagine 845 carries an N-linked (GlcNAc...) asparagine glycan. The segment at 892 to 1077 is disordered; sequence MVTNTVDSTT…QYNSDTQQTT (186 aa). The span at 894-929 shows a compositional bias: low complexity; it reads TNTVDSTTTESTSQSPSGIFSESGVSVETESSTVTT. Composition is skewed to polar residues over residues 930 to 941 and 947 to 965; these read AQTNPSVPTTES and TKGN…NVKS. A compositionally biased stretch (low complexity) spans 974 to 983; it reads TTSTAASTST. Asparagine 987 carries N-linked (GlcNAc...) asparagine glycosylation. Composition is skewed to low complexity over residues 998–1022 and 1035–1048; these read ASSP…STSV and APSA…TTTA. Residues asparagine 1050 and asparagine 1061 are each glycosylated (N-linked (GlcNAc...) asparagine). The span at 1057 to 1077 shows a compositional bias: low complexity; the sequence is TTSTNQSQSQSQYNSDTQQTT. Serine 1098 carries the GPI-anchor amidated serine lipid modification. Residues 1099–1119 constitute a propeptide, removed in mature form; it reads GSVIQHSTWLCGLITLLSLFI.

This sequence belongs to the ALS family. In terms of processing, the GPI-anchor is attached to the protein in the endoplasmic reticulum and serves to target the protein to the cell surface. There, the glucosamine-inositol phospholipid moiety is cleaved off and the GPI-modified mannoprotein is covalently attached via its lipidless GPI glycan remnant to the 1,6-beta-glucan of the outer cell wall layer.

It is found in the cell membrane. The protein resides in the secreted. Its subcellular location is the cell wall. Cell surface adhesion protein which mediates both yeast-to-host tissue adherence and yeast aggregation. Plays an important role in the biofilm formation and pathogenesis of C.albicans infections. Necessary for C.albicans to bind to N-cadherin on endothelial cells and E-cadherin on oral epithelial cells and subsequent endocytosis by these cells. During disseminated infection, mediates initial trafficking to the brain and renal cortex and contributes to fungal persistence in the kidneys. This Candida albicans (Yeast) protein is Agglutinin-like protein 3 (ALS3).